A 476-amino-acid polypeptide reads, in one-letter code: Methylenetetrahydrofolate--tRNA-(uracil-5-)-methyltransferase TrmFO (476 aa).

Gly-13–Gly-18 provides a ligand contact to FAD. A disordered region spans residues Pro-425 to Thr-446. Positions Ala-435–Thr-446 are enriched in basic and acidic residues.

The protein belongs to the MnmG family. TrmFO subfamily. The cofactor is FAD.

It localises to the cytoplasm. The catalysed reaction is uridine(54) in tRNA + (6R)-5,10-methylene-5,6,7,8-tetrahydrofolate + NADH + H(+) = 5-methyluridine(54) in tRNA + (6S)-5,6,7,8-tetrahydrofolate + NAD(+). The enzyme catalyses uridine(54) in tRNA + (6R)-5,10-methylene-5,6,7,8-tetrahydrofolate + NADPH + H(+) = 5-methyluridine(54) in tRNA + (6S)-5,6,7,8-tetrahydrofolate + NADP(+). Its function is as follows. Catalyzes the folate-dependent formation of 5-methyl-uridine at position 54 (M-5-U54) in all tRNAs. This Rhodopseudomonas palustris (strain BisB18) protein is Methylenetetrahydrofolate--tRNA-(uracil-5-)-methyltransferase TrmFO.